A 1436-amino-acid chain; its full sequence is Inositol hexakisphosphate and diphosphoinositol-pentakisphosphate kinase 1 (1436 aa).

64–65 contributes to the substrate binding site; the sequence is KK. ATP contacts are provided by residues Arg-145, Lys-198, His-205, Arg-224, 248–251, and 257–259; these read EEFM and DVK. Residue 224–225 participates in substrate binding; the sequence is RK. Residues Lys-259 and Arg-273 each coordinate substrate. ATP is bound by residues Ser-275, Asp-320, and 332–334; that span reads DVN. 337–340 contributes to the substrate binding site; sequence SFVK. The interval 382 to 453 is polyphosphoinositide-binding domain; that stretch reads PTTSGTMMEL…VLDITRLLLA (72 aa). The interval 915-998 is disordered; sequence GSAPAGCGFR…TSSSRPGGYR (84 aa). A phosphoserine mark is found at Ser-939, Ser-982, Ser-1032, Ser-1068, Ser-1140, and Ser-1147. 2 disordered regions span residues 1131–1191 and 1389–1436; these read NHQA…GFSD and SELS…EAIS. Over residues 1163 to 1181 the composition is skewed to low complexity; that stretch reads SSGPSSTVSSAGPSSPTTV. Acidic residues predominate over residues 1405 to 1436; the sequence is LSEETELQAQEVSEEIDQESEVVDELPPEAIS.

This sequence belongs to the histidine acid phosphatase family. VIP1 subfamily.

Its subcellular location is the cytoplasm. The protein resides in the cytosol. The protein localises to the cell membrane. It catalyses the reaction 1D-myo-inositol hexakisphosphate + ATP = 1-diphospho-1D-myo-inositol 2,3,4,5,6-pentakisphosphate + ADP. The enzyme catalyses 5-diphospho-1D-myo-inositol 1,2,3,4,6-pentakisphosphate + ATP + H(+) = 1,5-bis(diphospho)-1D-myo-inositol 2,3,4,6-tetrakisphosphate + ADP. Its function is as follows. Bifunctional inositol kinase that acts in concert with the IP6K kinases IP6K1, IP6K2 and IP6K3 to synthesize the diphosphate group-containing inositol pyrophosphates diphosphoinositol pentakisphosphate, PP-InsP5, and bis-diphosphoinositol tetrakisphosphate, (PP)2-InsP4. PP-InsP5 and (PP)2-InsP4, also respectively called InsP7 and InsP8, regulate a variety of cellular processes, including apoptosis, vesicle trafficking, cytoskeletal dynamics, exocytosis, insulin signaling and neutrophil activation. Phosphorylates inositol hexakisphosphate (InsP6) at position 1 to produce PP-InsP5 which is in turn phosphorylated by IP6Ks to produce (PP)2-InsP4. Alternatively, phosphorylates PP-InsP5 at position 1, produced by IP6Ks from InsP6, to produce (PP)2-InsP4. Activated when cells are exposed to hyperosmotic stress. In Mus musculus (Mouse), this protein is Inositol hexakisphosphate and diphosphoinositol-pentakisphosphate kinase 1.